The sequence spans 495 residues: MDFDFLTIAIGFLFTITLYQALNFFSRKSKNLPPGPSPLPLIGNLHLLGDQPHKSLAKLAKKHGPIMGLQLGQVTTIVVTSSGMAKEVLQKQDLAFSSRSIPNAIHAHDQYKYSVIWLPVASRWRGLRKALNSNMFSGNRLDANQHLRSRKVQELIAYCRKSSQTGDAIDVGRAAFRTSLNLLSNTMFSKDLTDPYSDSAKEFKDLVWNVMVEAGKPNLVDYFPLLDKVDPQGIRKRMTIHFGKILELFGGLIDERLQQKKAKGVNDDVLDVLLTTSEESPEEIDRTHIQRMCLDLFVAGTDTTSSTLEWAMSEMLKNPEKMKAAQAELAQVIGKGKAVEEADLARLPYLRCAIKETLRIHPPVPLLIPRRTEQEVEVCGYTVPKNSQVLVNVWAISRDDAIWKDPLSFKPERFLESELEMRGKDFELIPFGAGRRICPGLPLAVRMVPVMLGSLLNSFDWKLEGGIAPKDLDMEEKFGITLQKAHPLRAVATPL.

The chain crosses the membrane as a helical span at residues phenylalanine 5–phenylalanine 25. Position 438 (cysteine 438) interacts with heme.

It belongs to the cytochrome P450 family. Heme is required as a cofactor. Expressed in leaves, stems and roots.

The protein localises to the endoplasmic reticulum membrane. The catalysed reaction is (2E)-geraniol + reduced [NADPH--hemoprotein reductase] + O2 = (6E)-8-hydroxygeraniol + oxidized [NADPH--hemoprotein reductase] + H2O + H(+). Hydroxylase involved in the biosynthesis of hydroxygeraniol, a precursor of the iridoid monoterpenoid swertiamarin. The protein is Geraniol 8-hydroxylase (CYP76B10) of Swertia mussotii (Felwort).